Consider the following 1574-residue polypeptide: Myosin-2 (1574 aa).

An N-acetylserine modification is found at Ser-2. Positions 4-57 (EVGTRCWYPHKELGWIGAEVIKNEFNDGKYHLELQLEDDEIVSVDTKDLNNDKD) constitute a Myosin N-terminal SH3-like domain. In terms of domain architecture, Myosin motor spans 70–781 (EATEDLTSLS…MLAYLEKLRS (712 aa)). 164-171 (GESGAGKT) is a binding site for ATP. The tract at residues 443-523 (FIGVLDIYGF…LGILSLLDEE (81 aa)) is actin-binding. 6 IQ domains span residues 784–806 (MHNSIVMIQKKIRAKYYRKQYLQ), 807–831 (ISQAIKYLQNNIKGFIIRQRVNDEM), 832–855 (KVNCATLLQAAYRGHSIRANVFSV), 856–879 (LRTITNLQKKIRKELKQRQLKQEH), 880–902 (EYNAAVTIQSKVRTFEPRSRFLR), and 903–932 (TKKDTVVVQSLIRRRAAQRKLKQLKADAKS). A coiled-coil region spans residues 933–1088 (VNHLKEVSYK…RLQTAMSLGT (156 aa)). Residues 1087–1574 (GTVTTSVLPQ…VAQQVVQDGH (488 aa)) are non alpha-helical, tail domain. Position 1097 is a phosphothreonine (Thr-1097). The residue at position 1121 (Ser-1121) is a Phosphoserine. In terms of domain architecture, Dilute spans 1226 to 1501 (AQVLTTIQKV…LRYVADIVKK (276 aa)).

Belongs to the TRAFAC class myosin-kinesin ATPase superfamily. Myosin family. As to quaternary structure, homodimer. Interacts with calmodulin (CMD1) and the myosin light chain MLC1 through its IQ repeats. Binds to the membrane receptors SEC4 and VAC17 to transport secretory vesicles and the vacuole, respectively. Binds to KAR9, which transports BIM1-coated cytoplasmic microtubules that are attached to the spindle pole body into the emerging bud, thereby correctly orienting the mitotic spindle. Interacts with YPT11 and MMR1 to accelerate mitochondrial distribution to the bud. Interacts with SHE4 and localizes it to the bud tip. Interacts with RHO3 and SMY1, putative regulators of MYO2 function. Interacts with SRO7.

The protein localises to the bud neck. Its subcellular location is the bud tip. Its function is as follows. Myosin heavy chain that is required for the cell cycle-regulated transport of various organelles and proteins for their segregation. Functions by binding with its tail domain to receptor proteins on organelles and exerting force with its N-terminal motor domain against actin filaments, thereby transporting its cargo along polarized actin cables. Essential for the delivery of secretory vesicles to sites of active growth during bud emergence and cytokinesis. Required for segregation and inheritance of peroxisomes, late Golgi compartments, mitochondria and the vacuole to the daughter cell during cell division. Also required for correct alignment of the spindle during mitosis. The sequence is that of Myosin-2 (MYO2) from Saccharomyces cerevisiae (strain ATCC 204508 / S288c) (Baker's yeast).